Reading from the N-terminus, the 279-residue chain is NAD kinase (279 aa).

The Proton acceptor role is filled by aspartate 57. NAD(+) contacts are provided by residues 57–58 (DG), 133–134 (NE), arginine 159, aspartate 161, and 172–177 (TAYNKS).

The protein belongs to the NAD kinase family. A divalent metal cation serves as cofactor.

Its subcellular location is the cytoplasm. It catalyses the reaction NAD(+) + ATP = ADP + NADP(+) + H(+). Functionally, involved in the regulation of the intracellular balance of NAD and NADP, and is a key enzyme in the biosynthesis of NADP. Catalyzes specifically the phosphorylation on 2'-hydroxyl of the adenosine moiety of NAD to yield NADP. The sequence is that of NAD kinase from Streptococcus pyogenes serotype M2 (strain MGAS10270).